The following is a 116-amino-acid chain: Tyrosine-protein phosphatase 20 (116 aa).

A Tyrosine-protein phosphatase domain is found at 1-116 (WMMIVEQKCR…EIGGDAPMVV (116 aa)). Asp84 is a binding site for substrate.

It belongs to the protein-tyrosine phosphatase family.

It carries out the reaction O-phospho-L-tyrosyl-[protein] + H2O = L-tyrosyl-[protein] + phosphate. The polypeptide is Tyrosine-protein phosphatase 20 (STY-20) (Styela plicata (Wrinkled sea squirt)).